Here is a 450-residue protein sequence, read N- to C-terminus: 23S rRNA (uracil(1939)-C(5))-methyltransferase RlmD (450 aa).

The interval 1-22 (MARNKGGLRFQPSGGARGPAIP) is disordered. In terms of domain architecture, TRAM spans 20–78 (AIPVGKKQRLTIERLAHDGRGIAHEAGMTWFVSGGLPGEELEARVLGARSKVVDARSER). [4Fe-4S] cluster-binding residues include Cys-91, Cys-97, Cys-100, and Cys-179. S-adenosyl-L-methionine-binding residues include Gln-283, Phe-312, Asn-317, Glu-333, Asp-360, and Asp-381. Cys-407 acts as the Nucleophile in catalysis.

Belongs to the class I-like SAM-binding methyltransferase superfamily. RNA M5U methyltransferase family. RlmD subfamily.

The enzyme catalyses uridine(1939) in 23S rRNA + S-adenosyl-L-methionine = 5-methyluridine(1939) in 23S rRNA + S-adenosyl-L-homocysteine + H(+). In terms of biological role, catalyzes the formation of 5-methyl-uridine at position 1939 (m5U1939) in 23S rRNA. The chain is 23S rRNA (uracil(1939)-C(5))-methyltransferase RlmD from Pseudomonas aeruginosa (strain UCBPP-PA14).